Reading from the N-terminus, the 682-residue chain is Polyadenylate-binding protein 5 (682 aa).

RRM domains follow at residues 59 to 136 (SSLY…LSNR), 146 to 223 (GNVF…HFVR), 239 to 316 (TNVY…RAQK), and 342 to 419 (SNLY…LAQR). One can recognise a PABC domain in the interval 588–665 (TISKLASDLA…ALDVLRRSAD (78 aa)). A Phosphoserine modification is found at Ser600.

Belongs to the polyadenylate-binding protein type-1 family. As to expression, expressed predominantly in immature flowers but also at lower levels in mature flowers and siliques. Detected in tapetum, pollen, ovules and developing seeds. Also detected in primary inflorescences and immature siliques.

It localises to the cytoplasm. It is found in the nucleus. Its function is as follows. Binds the poly(A) tail of mRNA. Appears to be an important mediator of the multiple roles of the poly(A) tail in mRNA biogenesis, stability and translation. The sequence is that of Polyadenylate-binding protein 5 (PAB5) from Arabidopsis thaliana (Mouse-ear cress).